Here is a 309-residue protein sequence, read N- to C-terminus: Formimidoylglutamase (309 aa).

Mn(2+) is bound by residues His-120, Asp-145, His-147, Asp-149, Asp-236, and Asp-238.

It belongs to the arginase family. It depends on Mn(2+) as a cofactor.

The catalysed reaction is N-formimidoyl-L-glutamate + H2O = formamide + L-glutamate. Its pathway is amino-acid degradation; L-histidine degradation into L-glutamate; L-glutamate from N-formimidoyl-L-glutamate (hydrolase route): step 1/1. In terms of biological role, catalyzes the conversion of N-formimidoyl-L-glutamate to L-glutamate and formamide. This Chromobacterium violaceum (strain ATCC 12472 / DSM 30191 / JCM 1249 / CCUG 213 / NBRC 12614 / NCIMB 9131 / NCTC 9757 / MK) protein is Formimidoylglutamase.